A 177-amino-acid chain; its full sequence is RNA pyrophosphohydrolase (177 aa).

Residues 6-149 (GYRPNVGIVI…KRDVYRRVMK (144 aa)) enclose the Nudix hydrolase domain. A Nudix box motif is present at residues 38 to 59 (GGINPGESAEQAMYRELFEEVG).

The protein belongs to the Nudix hydrolase family. RppH subfamily. A divalent metal cation is required as a cofactor.

Its function is as follows. Accelerates the degradation of transcripts by removing pyrophosphate from the 5'-end of triphosphorylated RNA, leading to a more labile monophosphorylated state that can stimulate subsequent ribonuclease cleavage. The polypeptide is RNA pyrophosphohydrolase (Pectobacterium carotovorum subsp. carotovorum (strain PC1)).